A 102-amino-acid polypeptide reads, in one-letter code: Small ribosomal subunit protein uS10 (102 aa).

It belongs to the universal ribosomal protein uS10 family. As to quaternary structure, part of the 30S ribosomal subunit.

Its function is as follows. Involved in the binding of tRNA to the ribosomes. The protein is Small ribosomal subunit protein uS10 of Bifidobacterium animalis subsp. lactis (strain AD011).